Consider the following 336-residue polypeptide: Transmembrane protein 19 (336 aa).

6 consecutive transmembrane segments (helical) span residues 15-35 (MITNIVILSLIICISLAFWII), 49-69 (ISPWRWLFSVVVPVLIVSNGL), 84-104 (VVGFILTIANFSFFTSLLMFF), 218-238 (VTVVGLVSSLLGGTFVGIAYF), 257-277 (IIAFGGLAGLLGSIVDSYLGA), and 313-333 (VNLFSSVLIALLLPTAAWGFW).

It belongs to the TMEM19 family.

It localises to the membrane. This is Transmembrane protein 19 (TMEM19) from Homo sapiens (Human).